We begin with the raw amino-acid sequence, 179 residues long: MAELATIARPYAEALFRVAEGGDIAAWSTLVQELAQVARLPEVLSVASSPKVTRTQVAELLLAAVKSPLGAGAEAKNFVQMLVDNHRIALLPEIAEQFEALKNEREGAADAEIVSAFPLNGADLESLVSGLERKFKRKLKPTVAVDSSLIGGVRVTVGDEVLDTSVRARLASMQAALTA.

It belongs to the ATPase delta chain family. F-type ATPases have 2 components, F(1) - the catalytic core - and F(0) - the membrane proton channel. F(1) has five subunits: alpha(3), beta(3), gamma(1), delta(1), epsilon(1). F(0) has three main subunits: a(1), b(2) and c(10-14). The alpha and beta chains form an alternating ring which encloses part of the gamma chain. F(1) is attached to F(0) by a central stalk formed by the gamma and epsilon chains, while a peripheral stalk is formed by the delta and b chains.

It localises to the cell inner membrane. Functionally, f(1)F(0) ATP synthase produces ATP from ADP in the presence of a proton or sodium gradient. F-type ATPases consist of two structural domains, F(1) containing the extramembraneous catalytic core and F(0) containing the membrane proton channel, linked together by a central stalk and a peripheral stalk. During catalysis, ATP synthesis in the catalytic domain of F(1) is coupled via a rotary mechanism of the central stalk subunits to proton translocation. This protein is part of the stalk that links CF(0) to CF(1). It either transmits conformational changes from CF(0) to CF(1) or is implicated in proton conduction. This Burkholderia lata (strain ATCC 17760 / DSM 23089 / LMG 22485 / NCIMB 9086 / R18194 / 383) protein is ATP synthase subunit delta.